A 453-amino-acid chain; its full sequence is Insulinoma-associated protein 1b (453 aa).

The tract at residues 1-20 (MPKGFLVKRNKKAALVSYRI) is SNAG domain. Residues 140-179 (NSNRSGTASGAHAPAIQTGAKRPSADAAERKVSSKSAKKP) form a disordered region. Residues 162-171 (PSADAAERKV) show a composition bias toward basic and acidic residues. Residues 252–274 (YRCPECEKVFSCPANLASHRRWH) form a C2H2-type 1 zinc finger. The interval 298 to 318 (AEFPSDRDTPSPGLSESGSED) is disordered. C2H2-type zinc fingers lie at residues 321–343 (YDCQ…ILGH), 383–406 (LTCP…RLLH), and 412–435 (FPCK…NKCH).

The protein belongs to the INSM1 family.

Its subcellular location is the nucleus. In terms of biological role, may act as a transcriptional regulator. May play a role in neurogenesis and neuroendocrine cell differentiation during embryonic development. The chain is Insulinoma-associated protein 1b (insm1b) from Danio rerio (Zebrafish).